The primary structure comprises 255 residues: Cytochrome c oxidase subunit 3 (255 aa).

The next 7 helical transmembrane spans lie at 12–29 (INII…STGL), 57–77 (LKYL…INGI), 91–111 (IFGM…WGFF), 126–146 (LEAF…ISLI), 155–175 (YFEV…FLSF), 196–216 (FNVL…FALM), and 235–255 (GMYW…LFLL).

Belongs to the cytochrome c oxidase subunit 3 family. Component of the cytochrome c oxidase (complex IV, CIV), a multisubunit enzyme composed of a catalytic core of 3 subunits and several supernumerary subunits. The complex exists as a monomer or a dimer and forms supercomplexes (SCs) in the inner mitochondrial membrane with ubiquinol-cytochrome c oxidoreductase (cytochrome b-c1 complex, complex III, CIII).

The protein resides in the mitochondrion inner membrane. It catalyses the reaction 4 Fe(II)-[cytochrome c] + O2 + 8 H(+)(in) = 4 Fe(III)-[cytochrome c] + 2 H2O + 4 H(+)(out). Component of the cytochrome c oxidase, the last enzyme in the mitochondrial electron transport chain which drives oxidative phosphorylation. The respiratory chain contains 3 multisubunit complexes succinate dehydrogenase (complex II, CII), ubiquinol-cytochrome c oxidoreductase (cytochrome b-c1 complex, complex III, CIII) and cytochrome c oxidase (complex IV, CIV), that cooperate to transfer electrons derived from NADH and succinate to molecular oxygen, creating an electrochemical gradient over the inner membrane that drives transmembrane transport and the ATP synthase. Cytochrome c oxidase is the component of the respiratory chain that catalyzes the reduction of oxygen to water. Electrons originating from reduced cytochrome c in the intermembrane space (IMS) are transferred via the dinuclear copper A center (CU(A)) of subunit 2 and heme A of subunit 1 to the active site in subunit 1, a binuclear center (BNC) formed by heme A3 and copper B (CU(B)). The BNC reduces molecular oxygen to 2 water molecules using 4 electrons from cytochrome c in the IMS and 4 protons from the mitochondrial matrix. The chain is Cytochrome c oxidase subunit 3 (MT-CO3) from Theileria annulata.